The following is a 159-amino-acid chain: Transcription elongation factor GreA (159 aa).

Positions 2 to 77 (EENKEFLLTQ…LENMVRKAVI (76 aa)) form a coiled coil.

It belongs to the GreA/GreB family.

Functionally, necessary for efficient RNA polymerase transcription elongation past template-encoded arresting sites. The arresting sites in DNA have the property of trapping a certain fraction of elongating RNA polymerases that pass through, resulting in locked ternary complexes. Cleavage of the nascent transcript by cleavage factors such as GreA or GreB allows the resumption of elongation from the new 3'terminus. GreA releases sequences of 2 to 3 nucleotides. This is Transcription elongation factor GreA from Clostridioides difficile (strain 630) (Peptoclostridium difficile).